We begin with the raw amino-acid sequence, 190 residues long: Small ribosomal subunit protein eS7 (190 aa).

Belongs to the eukaryotic ribosomal protein eS7 family. In terms of assembly, component of the small ribosomal subunit. Part of the small subunit (SSU) processome, composed of more than 70 proteins and the RNA chaperone small nucleolar RNA (snoRNA) U3.

It localises to the cytoplasm. The protein localises to the cytoskeleton. The protein resides in the microtubule organizing center. Its subcellular location is the centrosome. It is found in the nucleus. It localises to the nucleolus. Component of the small ribosomal subunit. The ribosome is a large ribonucleoprotein complex responsible for the synthesis of proteins in the cell. Required for rRNA maturation. Part of the small subunit (SSU) processome, first precursor of the small eukaryotic ribosomal subunit. During the assembly of the SSU processome in the nucleolus, many ribosome biogenesis factors, an RNA chaperone and ribosomal proteins associate with the nascent pre-rRNA and work in concert to generate RNA folding, modifications, rearrangements and cleavage as well as targeted degradation of pre-ribosomal RNA by the RNA exosome. The protein is Small ribosomal subunit protein eS7 (RpS7) of Spodoptera frugiperda (Fall armyworm).